A 161-amino-acid polypeptide reads, in one-letter code: Arachidonate 5-lipoxygenase-activating protein (161 aa).

The Lumenal segment spans residues 1 to 8 (MDQEAVGN). Residues 9-30 (VVLLALVTLISVVQNAFFAHKV) form a helical membrane-spanning segment. At 31–52 (EHESKAHNGRSFQRTGTLAFER) the chain is on the cytoplasmic side. A helical transmembrane segment spans residues 53 to 77 (VYTANQNCVDAYPTFLVVLWTAGLL). Topologically, residues 78–80 (CSQ) are lumenal. Residues 81–102 (VPAAFAGLMYLFVRQKYFVGYL) traverse the membrane as a helical segment. Residues 103 to 107 (GERTQ) lie on the Cytoplasmic side of the membrane. The stretch at 108 to 115 (STPGYIFG) is an intramembrane region. The chain crosses the membrane as a helical span at residues 116-128 (KRIILFLFLMSFA). Topologically, residues 129–161 (GILNHYLIFFFGSDFENYIRTVSTTISPLLLIP) are lumenal.

It belongs to the MAPEG family. As to quaternary structure, homotrimer. Interacts with LTC4S and ALOX5.

It is found in the nucleus membrane. Its subcellular location is the endoplasmic reticulum membrane. Functionally, required for leukotriene biosynthesis by ALOX5 (5-lipoxygenase). Anchors ALOX5 to the membrane. Binds arachidonic acid, and could play an essential role in the transfer of arachidonic acid to ALOX5. Binds to MK-886, a compound that blocks the biosynthesis of leukotrienes. This Mus musculus (Mouse) protein is Arachidonate 5-lipoxygenase-activating protein (Alox5ap).